Consider the following 479-residue polypeptide: Cardiolipin synthase (479 aa).

A run of 2 helical transmembrane segments spans residues 5–25 (SLLL…IIFL) and 34–54 (WAWV…YLIF). PLD phosphodiesterase domains follow at residues 216-243 (INYR…GDEY) and 392-419 (QNGF…DVRS). Residues His-221, Lys-223, Asp-228, His-397, Lys-399, and Asp-404 contribute to the active site.

It belongs to the phospholipase D family. Cardiolipin synthase subfamily.

The protein resides in the cell membrane. It catalyses the reaction 2 a 1,2-diacyl-sn-glycero-3-phospho-(1'-sn-glycerol) = a cardiolipin + glycerol. Functionally, catalyzes the reversible phosphatidyl group transfer from one phosphatidylglycerol molecule to another to form cardiolipin (CL) (diphosphatidylglycerol) and glycerol. This chain is Cardiolipin synthase (cls), found in Oceanobacillus iheyensis (strain DSM 14371 / CIP 107618 / JCM 11309 / KCTC 3954 / HTE831).